Consider the following 250-residue polypeptide: 2,3-bisphosphoglycerate-dependent phosphoglycerate mutase (250 aa).

Substrate contacts are provided by residues 10–17 (RHGESQWN), 23–24 (TG), Arg-62, 89–92 (ERHY), Lys-100, 116–117 (RR), and 185–186 (GN). The active-site Tele-phosphohistidine intermediate is His-11. Catalysis depends on Glu-89, which acts as the Proton donor/acceptor.

Belongs to the phosphoglycerate mutase family. BPG-dependent PGAM subfamily. In terms of assembly, homodimer.

The catalysed reaction is (2R)-2-phosphoglycerate = (2R)-3-phosphoglycerate. It participates in carbohydrate degradation; glycolysis; pyruvate from D-glyceraldehyde 3-phosphate: step 3/5. Its function is as follows. Catalyzes the interconversion of 2-phosphoglycerate and 3-phosphoglycerate. This Yersinia enterocolitica serotype O:8 / biotype 1B (strain NCTC 13174 / 8081) protein is 2,3-bisphosphoglycerate-dependent phosphoglycerate mutase.